Here is a 271-residue protein sequence, read N- to C-terminus: Glutamate racemase (271 aa).

Residues 12–13 (DS) and 44–45 (YG) each bind substrate. The active-site Proton donor/acceptor is cysteine 75. A substrate-binding site is contributed by 76–77 (NT). Residue cysteine 185 is the Proton donor/acceptor of the active site. 186–187 (TH) is a binding site for substrate.

The protein belongs to the aspartate/glutamate racemases family.

It carries out the reaction L-glutamate = D-glutamate. Its pathway is cell wall biogenesis; peptidoglycan biosynthesis. Provides the (R)-glutamate required for cell wall biosynthesis. The protein is Glutamate racemase of Methylococcus capsulatus (strain ATCC 33009 / NCIMB 11132 / Bath).